The chain runs to 962 residues: Leucine--tRNA ligase (962 aa).

Residues 40 to 51 carry the 'HIGH' region motif; that stretch reads PYPSGAGLHVGH. The short motif at 737 to 741 is the 'KMSKS' region element; the sequence is KMSKS. Lysine 740 provides a ligand contact to ATP.

This sequence belongs to the class-I aminoacyl-tRNA synthetase family.

It is found in the cytoplasm. It carries out the reaction tRNA(Leu) + L-leucine + ATP = L-leucyl-tRNA(Leu) + AMP + diphosphate. The protein is Leucine--tRNA ligase of Flavobacterium psychrophilum (strain ATCC 49511 / DSM 21280 / CIP 103535 / JIP02/86).